A 623-amino-acid chain; its full sequence is Chaperone protein dnaK (623 aa).

Residues 598–623 (TPDAGAEGGAAPSQDDAIETDFSTEK) are disordered.

It belongs to the heat shock protein 70 family.

It localises to the plastid. Its subcellular location is the chloroplast. Its function is as follows. Acts as a chaperone. The polypeptide is Chaperone protein dnaK (Emiliania huxleyi (Coccolithophore)).